Consider the following 104-residue polypeptide: Enhancer of rudimentary homolog (104 aa).

S2 carries the N-acetylserine modification. A Phosphothreonine modification is found at T11. Residue K12 forms a Glycyl lysine isopeptide (Lys-Gly) (interchain with G-Cter in SUMO2) linkage.

The protein belongs to the E(R) family. In terms of assembly, homodimer.

Its subcellular location is the nucleus. May have a role in the cell cycle. In Bos taurus (Bovine), this protein is Enhancer of rudimentary homolog (ERH).